The following is a 225-amino-acid chain: Glutathione S-transferase A (225 aa).

The GST N-terminal domain maps to 3-85 (KDMTLLWGSG…YLESQFKSQG (83 aa)). Arg18 provides a ligand contact to glutathione. Residues 92-217 (CPAEQAMMYQ…WPPTWLESPQ (126 aa)) enclose the GST C-terminal domain.

Belongs to the GST superfamily. Theta family. In terms of assembly, homodimer. As to expression, found in all the tissues examined. Highest values found in liver and in intestinal mucosa.

It is found in the cytoplasm. It carries out the reaction RX + glutathione = an S-substituted glutathione + a halide anion + H(+). Its function is as follows. Conjugation of reduced glutathione to a wide number of exogenous and endogenous hydrophobic electrophiles. The sequence is that of Glutathione S-transferase A from Pleuronectes platessa (European plaice).